A 133-amino-acid chain; its full sequence is Small ribosomal subunit protein bS6 (133 aa).

Belongs to the bacterial ribosomal protein bS6 family.

Binds together with bS18 to 16S ribosomal RNA. This Chlorobium limicola (strain DSM 245 / NBRC 103803 / 6330) protein is Small ribosomal subunit protein bS6.